A 490-amino-acid chain; its full sequence is ATP synthase subunit beta, chloroplastic (490 aa).

Residue 170 to 177 (GGAGVGKT) participates in ATP binding.

Belongs to the ATPase alpha/beta chains family. As to quaternary structure, F-type ATPases have 2 components, CF(1) - the catalytic core - and CF(0) - the membrane proton channel. CF(1) has five subunits: alpha(3), beta(3), gamma(1), delta(1), epsilon(1). CF(0) has four main subunits: a(1), b(1), b'(1) and c(9-12).

The protein resides in the plastid. It localises to the chloroplast thylakoid membrane. The enzyme catalyses ATP + H2O + 4 H(+)(in) = ADP + phosphate + 5 H(+)(out). In terms of biological role, produces ATP from ADP in the presence of a proton gradient across the membrane. The catalytic sites are hosted primarily by the beta subunits. The polypeptide is ATP synthase subunit beta, chloroplastic (Ipomoea setosa (Brazilian morning glory)).